The following is a 20-amino-acid chain: Venom protease (20 aa).

It belongs to the peptidase S1 family. Post-translationally, contains 3 disulfide bonds. N-glycosylated. As to expression, expressed by the venom duct.

The protein localises to the secreted. The chain is Venom protease from Bombus terrestris (Buff-tailed bumblebee).